The chain runs to 613 residues: Portal protein (613 aa).

The tract at residues 577–613 (ATGGDHGIRQAPSARGDAEPDHAKSKPARDPPPGAGS) is disordered. The segment covering 592–605 (GDAEPDHAKSKPAR) has biased composition (basic and acidic residues).

It belongs to the herpesviridae portal protein family. Homododecamerizes. Interacts with terminase subunits TRM1 and TRM3.

It is found in the virion. It localises to the host nucleus. Forms a portal in the viral capsid through which viral DNA is translocated during DNA packaging. Assembles as a dodecamer at a single fivefold axe of the T=16 icosahedric capsid. Binds to the molecular motor that translocates the viral DNA, termed terminase. This Homo sapiens (Human) protein is Portal protein.